Here is a 391-residue protein sequence, read N- to C-terminus: NADH-quinone oxidoreductase subunit D (391 aa).

The protein belongs to the complex I 49 kDa subunit family. As to quaternary structure, NDH-1 is composed of 14 different subunits. Subunits NuoB, C, D, E, F, and G constitute the peripheral sector of the complex.

It localises to the cell inner membrane. It catalyses the reaction a quinone + NADH + 5 H(+)(in) = a quinol + NAD(+) + 4 H(+)(out). NDH-1 shuttles electrons from NADH, via FMN and iron-sulfur (Fe-S) centers, to quinones in the respiratory chain. The immediate electron acceptor for the enzyme in this species is believed to be ubiquinone. Couples the redox reaction to proton translocation (for every two electrons transferred, four hydrogen ions are translocated across the cytoplasmic membrane), and thus conserves the redox energy in a proton gradient. This chain is NADH-quinone oxidoreductase subunit D, found in Rickettsia akari (strain Hartford).